Here is a 459-residue protein sequence, read N- to C-terminus: Putrescine aminotransferase (459 aa).

Residues 150-151 and Q274 each bind pyridoxal 5'-phosphate; that span reads GT. An N6-(pyridoxal phosphate)lysine modification is found at K300. T332 contributes to the pyridoxal 5'-phosphate binding site.

Belongs to the class-III pyridoxal-phosphate-dependent aminotransferase family. Putrescine aminotransferase subfamily. Pyridoxal 5'-phosphate serves as cofactor.

It carries out the reaction an alkane-alpha,omega-diamine + 2-oxoglutarate = an omega-aminoaldehyde + L-glutamate. It catalyses the reaction putrescine + 2-oxoglutarate = 1-pyrroline + L-glutamate + H2O. The catalysed reaction is cadaverine + 2-oxoglutarate = 5-aminopentanal + L-glutamate. Its pathway is amine and polyamine degradation; putrescine degradation; 4-aminobutanal from putrescine (transaminase route): step 1/1. In terms of biological role, catalyzes the aminotransferase reaction from putrescine to 2-oxoglutarate, leading to glutamate and 4-aminobutanal, which spontaneously cyclizes to form 1-pyrroline. This is the first step in one of two pathways for putrescine degradation, where putrescine is converted into 4-aminobutanoate (gamma-aminobutyrate or GABA) via 4-aminobutanal. Also functions as a cadaverine transaminase in a a L-lysine degradation pathway to succinate that proceeds via cadaverine, glutarate and L-2-hydroxyglutarate. This is Putrescine aminotransferase from Escherichia coli (strain SMS-3-5 / SECEC).